A 103-amino-acid chain; its full sequence is UPF0102 protein aq_041 (103 aa).

The protein belongs to the UPF0102 family.

This is UPF0102 protein aq_041 from Aquifex aeolicus (strain VF5).